The following is a 450-amino-acid chain: Probable ECA polymerase (450 aa).

11 helical membrane passes run 6-26 (FSGL…LTWF), 37-57 (VFFS…TSVL), 63-83 (VGVA…CFYA), 118-138 (VILM…NGFL), 155-175 (GVAL…VYFL), 181-201 (AWLF…MIVG), 207-227 (IIIA…ISLW), 228-248 (MLAA…LKRY), 341-361 (LVVM…GLII), 378-398 (YKAA…IVLA), and 410-430 (VFFI…YWLF).

Belongs to the WzyE family. Probably part of a complex composed of WzxE, WzyE and WzzE.

It is found in the cell inner membrane. The protein operates within bacterial outer membrane biogenesis; enterobacterial common antigen biosynthesis. Probably involved in the polymerization of enterobacterial common antigen (ECA) trisaccharide repeat units. The sequence is that of Probable ECA polymerase from Shigella sonnei (strain Ss046).